Consider the following 156-residue polypeptide: ATP synthase subunit b (156 aa).

The helical transmembrane segment at 11–31 (AIAFVLFVIFCMKYVWPPIMA) threads the bilayer.

This sequence belongs to the ATPase B chain family. As to quaternary structure, F-type ATPases have 2 components, F(1) - the catalytic core - and F(0) - the membrane proton channel. F(1) has five subunits: alpha(3), beta(3), gamma(1), delta(1), epsilon(1). F(0) has three main subunits: a(1), b(2) and c(10-14). The alpha and beta chains form an alternating ring which encloses part of the gamma chain. F(1) is attached to F(0) by a central stalk formed by the gamma and epsilon chains, while a peripheral stalk is formed by the delta and b chains.

The protein localises to the cell inner membrane. F(1)F(0) ATP synthase produces ATP from ADP in the presence of a proton or sodium gradient. F-type ATPases consist of two structural domains, F(1) containing the extramembraneous catalytic core and F(0) containing the membrane proton channel, linked together by a central stalk and a peripheral stalk. During catalysis, ATP synthesis in the catalytic domain of F(1) is coupled via a rotary mechanism of the central stalk subunits to proton translocation. In terms of biological role, component of the F(0) channel, it forms part of the peripheral stalk, linking F(1) to F(0). The polypeptide is ATP synthase subunit b (Yersinia pseudotuberculosis serotype O:1b (strain IP 31758)).